Reading from the N-terminus, the 300-residue chain is GTPase Era (300 aa).

In terms of domain architecture, Era-type G spans 8 to 176 (RCGYVAIVGR…EKVIADHLPE (169 aa)). Positions 16-23 (GRPNVGKS) are G1. 16 to 23 (GRPNVGKS) provides a ligand contact to GTP. Positions 42–46 (QTTRH) are G2. Residues 63 to 66 (DTPG) form a G3 region. GTP contacts are provided by residues 63–67 (DTPGM) and 125–128 (NKTD). Positions 125–128 (NKTD) are G4. Residues 155–157 (ISA) form a G5 region. One can recognise a KH type-2 domain in the interval 199–283 (VREKIMRQLG…MLNLWVKVKG (85 aa)).

This sequence belongs to the TRAFAC class TrmE-Era-EngA-EngB-Septin-like GTPase superfamily. Era GTPase family. In terms of assembly, monomer.

Its subcellular location is the cytoplasm. The protein localises to the cell inner membrane. Functionally, an essential GTPase that binds both GDP and GTP, with rapid nucleotide exchange. Plays a role in 16S rRNA processing and 30S ribosomal subunit biogenesis and possibly also in cell cycle regulation and energy metabolism. In Pseudomonas fluorescens (strain Pf0-1), this protein is GTPase Era.